The sequence spans 205 residues: Large ribosomal subunit protein uL4 (205 aa).

The segment at 48 to 79 is disordered; that stretch reads KAQKSRSDVSGGGKKPWKQKGSGHARAGTTRS.

This sequence belongs to the universal ribosomal protein uL4 family. As to quaternary structure, part of the 50S ribosomal subunit.

Functionally, one of the primary rRNA binding proteins, this protein initially binds near the 5'-end of the 23S rRNA. It is important during the early stages of 50S assembly. It makes multiple contacts with different domains of the 23S rRNA in the assembled 50S subunit and ribosome. Forms part of the polypeptide exit tunnel. This Methylococcus capsulatus (strain ATCC 33009 / NCIMB 11132 / Bath) protein is Large ribosomal subunit protein uL4.